The chain runs to 169 residues: Cysteine synthase B (169 aa).

Lys-45 bears the N6-(pyridoxal phosphate)lysine mark. Asn-75 is a pyridoxal 5'-phosphate binding site. The segment at 146-169 is disordered; the sequence is ANGDNPEAHYTSTGPEIWRQTGGT.

The protein belongs to the cysteine synthase/cystathionine beta-synthase family. Pyridoxal 5'-phosphate serves as cofactor.

It catalyses the reaction O-acetyl-L-serine + hydrogen sulfide = L-cysteine + acetate. The protein operates within amino-acid biosynthesis; L-cysteine biosynthesis; L-cysteine from L-serine: step 2/2. This chain is Cysteine synthase B (cysM), found in Pseudomonas syringae pv. syringae.